The sequence spans 284 residues: RNase adapter protein RapZ (284 aa).

Residue 8–15 participates in ATP binding; that stretch reads GRSGSGKS. 56 to 59 is a GTP binding site; that stretch reads DVRN. The segment at 266–284 is RNA-binding; the sequence is RSRGKNVQSRHRTLEKRKT.

Belongs to the RapZ-like family. RapZ subfamily. Homotrimer.

Its function is as follows. Modulates the synthesis of GlmS, by affecting the processing and stability of the regulatory small RNA GlmZ. When glucosamine-6-phosphate (GlcN6P) concentrations are high in the cell, RapZ binds GlmZ and targets it to cleavage by RNase E. Consequently, GlmZ is inactivated and unable to activate GlmS synthesis. Under low GlcN6P concentrations, RapZ is sequestered and inactivated by an other regulatory small RNA, GlmY, preventing GlmZ degradation and leading to synthesis of GlmS. This Escherichia fergusonii (strain ATCC 35469 / DSM 13698 / CCUG 18766 / IAM 14443 / JCM 21226 / LMG 7866 / NBRC 102419 / NCTC 12128 / CDC 0568-73) protein is RNase adapter protein RapZ.